A 137-amino-acid polypeptide reads, in one-letter code: Putative nucleoside diphosphate kinase (137 aa).

ATP contacts are provided by Phe-45, Arg-73, Thr-79, Arg-90, and Asn-100. His-103 functions as the Pros-phosphohistidine intermediate in the catalytic mechanism.

It belongs to the NDK family. It depends on Mg(2+) as a cofactor.

It carries out the reaction a 2'-deoxyribonucleoside 5'-diphosphate + ATP = a 2'-deoxyribonucleoside 5'-triphosphate + ADP. The catalysed reaction is a ribonucleoside 5'-diphosphate + ATP = a ribonucleoside 5'-triphosphate + ADP. Major role in the synthesis of nucleoside triphosphates other than ATP. The ATP gamma phosphate is transferred to the NDP beta phosphate via a ping-pong mechanism, using a phosphorylated active-site intermediate. This chain is Putative nucleoside diphosphate kinase (NME2P1), found in Homo sapiens (Human).